Here is a 276-residue protein sequence, read N- to C-terminus: Probable endonuclease 4 (276 aa).

Residues histidine 65, histidine 105, glutamate 141, aspartate 175, histidine 178, histidine 210, aspartate 223, histidine 225, and glutamate 255 each coordinate Zn(2+).

The protein belongs to the AP endonuclease 2 family. It depends on Zn(2+) as a cofactor.

The catalysed reaction is Endonucleolytic cleavage to 5'-phosphooligonucleotide end-products.. Endonuclease IV plays a role in DNA repair. It cleaves phosphodiester bonds at apurinic or apyrimidinic (AP) sites, generating a 3'-hydroxyl group and a 5'-terminal sugar phosphate. The protein is Probable endonuclease 4 of Symbiobacterium thermophilum (strain DSM 24528 / JCM 14929 / IAM 14863 / T).